Here is a 281-residue protein sequence, read N- to C-terminus: Pantothenate synthetase (281 aa).

30 to 37 lines the ATP pocket; sequence MGYLHEGH. H37 acts as the Proton donor in catalysis. Q61 contributes to the (R)-pantoate binding site. Residue Q61 coordinates beta-alanine. ATP is bound at residue 147–150; it reads GEKD. Q153 provides a ligand contact to (R)-pantoate. Residues I176 and 184–187 contribute to the ATP site; that span reads KSSR.

The protein belongs to the pantothenate synthetase family. As to quaternary structure, homodimer.

It is found in the cytoplasm. The enzyme catalyses (R)-pantoate + beta-alanine + ATP = (R)-pantothenate + AMP + diphosphate + H(+). The protein operates within cofactor biosynthesis; (R)-pantothenate biosynthesis; (R)-pantothenate from (R)-pantoate and beta-alanine: step 1/1. Functionally, catalyzes the condensation of pantoate with beta-alanine in an ATP-dependent reaction via a pantoyl-adenylate intermediate. The sequence is that of Pantothenate synthetase from Clostridium botulinum (strain Langeland / NCTC 10281 / Type F).